Reading from the N-terminus, the 267-residue chain is Triosephosphate isomerase (267 aa).

12 to 14 contributes to the substrate binding site; it reads NWK. Residue histidine 104 is the Electrophile of the active site. Glutamate 176 serves as the catalytic Proton acceptor. Substrate-binding positions include glycine 182, serine 222, and 243 to 244; that span reads GG.

It belongs to the triosephosphate isomerase family. As to quaternary structure, homodimer.

The protein resides in the cytoplasm. The catalysed reaction is D-glyceraldehyde 3-phosphate = dihydroxyacetone phosphate. Its pathway is carbohydrate biosynthesis; gluconeogenesis. It functions in the pathway carbohydrate degradation; glycolysis; D-glyceraldehyde 3-phosphate from glycerone phosphate: step 1/1. Its function is as follows. Involved in the gluconeogenesis. Catalyzes stereospecifically the conversion of dihydroxyacetone phosphate (DHAP) to D-glyceraldehyde-3-phosphate (G3P). The sequence is that of Triosephosphate isomerase from Bifidobacterium longum (strain DJO10A).